Here is a 132-residue protein sequence, read N- to C-terminus: Translation initiation factor 5A (132 aa).

A Hypusine modification is found at K36.

The protein belongs to the eIF-5A family.

The protein localises to the cytoplasm. Functionally, functions by promoting the formation of the first peptide bond. The protein is Translation initiation factor 5A (eIF5A) of Desulfurococcus amylolyticus (strain DSM 18924 / JCM 16383 / VKM B-2413 / 1221n) (Desulfurococcus kamchatkensis).